Reading from the N-terminus, the 735-residue chain is Translation initiation factor IF-2 (735 aa).

2 stretches are compositionally biased toward basic and acidic residues: residues 52–66 (VNSEKKAEKKTEKPK) and 101–117 (KGKETKKTEAQQQEKKL). Residues 52–154 (VNSEKKAEKK…PAKKEKELPK (103 aa)) form a disordered region. The segment covering 121-133 (AKKKGKGPMKGKK) has biased composition (basic residues). Residues 134 to 145 (QAAPASKQAQQP) show a composition bias toward low complexity. In terms of domain architecture, tr-type G spans 236–405 (ERPPVVTIMG…LLVSEMEELK (170 aa)). The G1 stretch occupies residues 245 to 252 (GHVDHGKT). 245-252 (GHVDHGKT) is a binding site for GTP. Residues 270 to 274 (GITQH) form a G2 region. The segment at 291 to 294 (DTPG) is G3. GTP contacts are provided by residues 291–295 (DTPGH) and 345–348 (NKMD). The tract at residues 345-348 (NKMD) is G4. The interval 381–383 (SAK) is G5.

Belongs to the TRAFAC class translation factor GTPase superfamily. Classic translation factor GTPase family. IF-2 subfamily.

The protein localises to the cytoplasm. One of the essential components for the initiation of protein synthesis. Protects formylmethionyl-tRNA from spontaneous hydrolysis and promotes its binding to the 30S ribosomal subunits. Also involved in the hydrolysis of GTP during the formation of the 70S ribosomal complex. The chain is Translation initiation factor IF-2 from Geobacillus thermodenitrificans (strain NG80-2).